Consider the following 373-residue polypeptide: Cobalt-precorrin-5B C(1)-methyltransferase (373 aa).

The protein belongs to the CbiD family.

The catalysed reaction is Co-precorrin-5B + S-adenosyl-L-methionine = Co-precorrin-6A + S-adenosyl-L-homocysteine. It functions in the pathway cofactor biosynthesis; adenosylcobalamin biosynthesis; cob(II)yrinate a,c-diamide from sirohydrochlorin (anaerobic route): step 6/10. Its function is as follows. Catalyzes the methylation of C-1 in cobalt-precorrin-5B to form cobalt-precorrin-6A. The polypeptide is Cobalt-precorrin-5B C(1)-methyltransferase (Listeria welshimeri serovar 6b (strain ATCC 35897 / DSM 20650 / CCUG 15529 / CIP 8149 / NCTC 11857 / SLCC 5334 / V8)).